Here is an 872-residue protein sequence, read N- to C-terminus: MPQLLRDILCVIETFHKYAREDAATLTCTELKQLIQSEFEDIFQPCAIHAVERNLNLLNIDSNGAISFDEFVLAIFSFLNVCYLDTQSLLNSEPRQVSKPEGMPHDMGLQVTNETDQWTEGTSQTQDKVVLPSGTASSTHLSLEERAVEHNRVDPQGHTTAHKLPVETSEHSDSKNQHLKGDEQSQKVDQDVSATGDSRTQRETSKPMAGSEQISSHTKGEGQNKEILQKGDILARKQSGTETGGRFGEQEGSLGILHSPLEETTQRPGGSSEDQEVAGEKGVKGHPKSQEPSVQGKDEPSSEHVDLPKQAAARKPSQTQKSAAAKDESRTAETPEPPIQEKEYETRDLSVQGENRNVSETPMVRVERKGVRGPEVHQTVGQKQIEEKTQPPALEEPTEDKKYHELQESSKEKNAGEDSETHELNSEGGEQKDSESEGAISPGEEARHAEEGTAEALVNSKNAPEAEGTPGTRERIWELTTLENQSGEKNKMTTKIHDKLVKEDDGYQGEGSEPVATQNDERSPETPNSLTAEDGDSNSETSDLFVQGDSQSQTNPFRGSVQGSDSNNPETQKHLALSEEKRVQEAAVLAVRGEDEQVTEEHAQEHEGQGSATTGRGPAVEPRGHSDTQVFIVRDENTKSLEPGIPGAPNAGITKQLSVRQLPTKKDSRKELKDQSPSTKKEEDGALEAQEDLVKSLDENNAVSQKTCPATLEEETESPQQLAGEQSLSTKEHDPSVSESGLEERMQRDQELCLVERGAEHSSPLYEALQEKMLQQTNVTQGEHQNQAQTASVASPEIRRNQSSASLTNDSSDGLVFFIDRQALQKYIREFLPDEDPTGAQQISAPQALEDKQGRPQREELEPQKEASAPKQ.

The EF-hand domain occupies 46–81 (CAIHAVERNLNLLNIDSNGAISFDEFVLAIFSFLNV). Positions 117 to 127 (QWTEGTSQTQD) are enriched in polar residues. 3 disordered regions span residues 117–759 (QWTE…ERGA), 774–813 (LQQT…DSSD), and 830–872 (EFLP…APKQ). 8 stretches are compositionally biased toward basic and acidic residues: residues 142–155 (SLEE…RVDP), 164–190 (LPVE…KVDQ), 218–235 (TKGE…DILA), 296–307 (GKDEPSSEHVDL), 324–348 (AAKD…ETRD), 365–375 (RVERKGVRGPE), 399–435 (EDKK…KDSE), and 486–505 (SGEK…KEDD). The span at 538–570 (NSETSDLFVQGDSQSQTNPFRGSVQGSDSNNPE) shows a compositional bias: polar residues. Composition is skewed to basic and acidic residues over residues 571–584 (TQKH…KRVQ), 592–608 (RGED…EHEG), and 664–684 (TKKD…KEED). Polar residues-rich tracts occupy residues 699-708 (ENNAVSQKTC) and 718-729 (SPQQLAGEQSLS). The span at 730–751 (TKEHDPSVSESGLEERMQRDQE) shows a compositional bias: basic and acidic residues. 2 stretches are compositionally biased toward polar residues: residues 774–793 (LQQT…TASV) and 801–812 (NQSSASLTNDSS). Residues 849–865 (LEDKQGRPQREELEPQK) are compositionally biased toward basic and acidic residues.

Belongs to the S-100 family.

This chain is Trichohyalin-like protein 1 (TCHHL1), found in Bos taurus (Bovine).